A 315-amino-acid polypeptide reads, in one-letter code: Homoserine O-succinyltransferase (315 aa).

Residue C142 is the Acyl-thioester intermediate of the active site. Substrate contacts are provided by K163 and S192. Residue H235 is the Proton acceptor of the active site. The active site involves E237. A substrate-binding site is contributed by R249.

This sequence belongs to the MetA family.

Its subcellular location is the cytoplasm. It catalyses the reaction L-homoserine + succinyl-CoA = O-succinyl-L-homoserine + CoA. It participates in amino-acid biosynthesis; L-methionine biosynthesis via de novo pathway; O-succinyl-L-homoserine from L-homoserine: step 1/1. In terms of biological role, transfers a succinyl group from succinyl-CoA to L-homoserine, forming succinyl-L-homoserine. This chain is Homoserine O-succinyltransferase, found in Shewanella piezotolerans (strain WP3 / JCM 13877).